The sequence spans 384 residues: Probable L-tyrosine/L-aspartate decarboxylase (384 aa).

K233 is subject to N6-(pyridoxal phosphate)lysine.

Belongs to the group II decarboxylase family. MfnA subfamily. Requires pyridoxal 5'-phosphate as cofactor.

It carries out the reaction L-tyrosine + H(+) = tyramine + CO2. It catalyses the reaction L-aspartate + H(+) = beta-alanine + CO2. Its pathway is cofactor biosynthesis; methanofuran biosynthesis. The protein operates within cofactor biosynthesis; coenzyme A biosynthesis. In terms of biological role, catalyzes the decarboxylation of L-tyrosine to produce tyramine for methanofuran biosynthesis. Can also catalyze the decarboxylation of L-aspartate to produce beta-alanine for coenzyme A (CoA) biosynthesis. The sequence is that of Probable L-tyrosine/L-aspartate decarboxylase from Methanococcus maripaludis (strain C5 / ATCC BAA-1333).